A 452-amino-acid polypeptide reads, in one-letter code: MFTSQEIIETINMVKQSNLDIRTITVGISLFDCSSDIPQRFIDNMRKKIIKYAGNLKNVANEIEDMFGLPIVNRRVALTPISLLTFSYSYEDLLKVALAIDEIAKELEIDLIGGYSASVHKNYDENTKKFISSIPDALASTDRLCSSVDVGTTRSGINLDVIAHLGHIIKDIAQKTKDKDSFGCARFVVFANAPDDNPFMAGAFHGTGEGDSAINVGISGPGVVKRALEGKKDASIDEVYETIKKMAFKITRAGQLVLKYASERLNIPMGIVDLSLAPTPKIGDSIAEILEEMGLEKVGGYGSTFALALLNDAVKKGGAMAASFTGGLSGAFIPVSEDSGMVKGVEAGALSLEKLEAMTSVCSVGLDMIVVPGDVEAEVISAMIADEIAIGIYNNKTTAVRVIPAYGKKEGDEVNFGGLLGRSKVMSINKSSPKRLIERGGRVPPPVISLRN.

Belongs to the UPF0210 family. In terms of assembly, homodimer.

The chain is UPF0210 protein Csac_1314 from Caldicellulosiruptor saccharolyticus (strain ATCC 43494 / DSM 8903 / Tp8T 6331).